The primary structure comprises 105 residues: Pyrimidine/purine nucleoside phosphorylase (105 aa).

The protein belongs to the nucleoside phosphorylase PpnP family.

The enzyme catalyses a purine D-ribonucleoside + phosphate = a purine nucleobase + alpha-D-ribose 1-phosphate. It catalyses the reaction adenosine + phosphate = alpha-D-ribose 1-phosphate + adenine. The catalysed reaction is cytidine + phosphate = cytosine + alpha-D-ribose 1-phosphate. It carries out the reaction guanosine + phosphate = alpha-D-ribose 1-phosphate + guanine. The enzyme catalyses inosine + phosphate = alpha-D-ribose 1-phosphate + hypoxanthine. It catalyses the reaction thymidine + phosphate = 2-deoxy-alpha-D-ribose 1-phosphate + thymine. The catalysed reaction is uridine + phosphate = alpha-D-ribose 1-phosphate + uracil. It carries out the reaction xanthosine + phosphate = alpha-D-ribose 1-phosphate + xanthine. Its function is as follows. Catalyzes the phosphorolysis of diverse nucleosides, yielding D-ribose 1-phosphate and the respective free bases. Can use uridine, adenosine, guanosine, cytidine, thymidine, inosine and xanthosine as substrates. Also catalyzes the reverse reactions. The polypeptide is Pyrimidine/purine nucleoside phosphorylase (Clostridioides difficile (strain 630) (Peptoclostridium difficile)).